A 59-amino-acid polypeptide reads, in one-letter code: Large ribosomal subunit protein uL30 (59 aa).

The protein belongs to the universal ribosomal protein uL30 family. In terms of assembly, part of the 50S ribosomal subunit.

This is Large ribosomal subunit protein uL30 from Clostridium botulinum (strain ATCC 19397 / Type A).